The sequence spans 356 residues: Histidinol-phosphate aminotransferase 2 (356 aa).

At K213 the chain carries N6-(pyridoxal phosphate)lysine.

The protein belongs to the class-II pyridoxal-phosphate-dependent aminotransferase family. Histidinol-phosphate aminotransferase subfamily. As to quaternary structure, homodimer. Requires pyridoxal 5'-phosphate as cofactor.

The enzyme catalyses L-histidinol phosphate + 2-oxoglutarate = 3-(imidazol-4-yl)-2-oxopropyl phosphate + L-glutamate. It participates in amino-acid biosynthesis; L-histidine biosynthesis; L-histidine from 5-phospho-alpha-D-ribose 1-diphosphate: step 7/9. This is Histidinol-phosphate aminotransferase 2 from Burkholderia mallei (strain ATCC 23344).